Here is a 115-residue protein sequence, read N- to C-terminus: Ribonuclease P protein component (115 aa).

Belongs to the RnpA family. As to quaternary structure, consists of a catalytic RNA component (M1 or rnpB) and a protein subunit.

The catalysed reaction is Endonucleolytic cleavage of RNA, removing 5'-extranucleotides from tRNA precursor.. RNaseP catalyzes the removal of the 5'-leader sequence from pre-tRNA to produce the mature 5'-terminus. It can also cleave other RNA substrates such as 4.5S RNA. The protein component plays an auxiliary but essential role in vivo by binding to the 5'-leader sequence and broadening the substrate specificity of the ribozyme. The chain is Ribonuclease P protein component from Staphylococcus epidermidis (strain ATCC 35984 / DSM 28319 / BCRC 17069 / CCUG 31568 / BM 3577 / RP62A).